The sequence spans 271 residues: Oxamate carbamoyltransferase subunit AllH (271 aa).

Belongs to the AllH family. The OXTCase is composed of 3 subunits, AllF, AllG and AllH. The cofactor is Mg(2+).

The catalysed reaction is oxamate + carbamoyl phosphate = N-carbamoyl-2-oxoglycine + phosphate. It functions in the pathway nitrogen metabolism; (S)-allantoin degradation. In terms of biological role, component of a carbamoyltransferase involved in the anaerobic nitrogen utilization via the assimilation of allantoin. Catalyzes the conversion of oxalurate (N-carbamoyl-2-oxoglycine) to oxamate and carbamoyl phosphate. This chain is Oxamate carbamoyltransferase subunit AllH, found in Escherichia coli O157:H7.